The chain runs to 319 residues: Methionyl-tRNA formyltransferase (319 aa).

110–113 (SLLP) provides a ligand contact to (6S)-5,6,7,8-tetrahydrofolate.

This sequence belongs to the Fmt family.

The catalysed reaction is L-methionyl-tRNA(fMet) + (6R)-10-formyltetrahydrofolate = N-formyl-L-methionyl-tRNA(fMet) + (6S)-5,6,7,8-tetrahydrofolate + H(+). Its function is as follows. Attaches a formyl group to the free amino group of methionyl-tRNA(fMet). The formyl group appears to play a dual role in the initiator identity of N-formylmethionyl-tRNA by promoting its recognition by IF2 and preventing the misappropriation of this tRNA by the elongation apparatus. The chain is Methionyl-tRNA formyltransferase from Geobacillus thermodenitrificans (strain NG80-2).